Reading from the N-terminus, the 680-residue chain is Serine/threonine-protein kinase YPK1 (680 aa).

Positions 1–11 (MYSWKSKFKFG) are enriched in basic residues. The segment at 1–117 (MYSWKSKFKF…GTPNDATSSS (117 aa)) is disordered. Composition is skewed to basic and acidic residues over residues 12-21 (KSKEEKEAKH) and 41-56 (GEHD…DRKG). Thr-57 bears the Phosphothreonine mark. A compositionally biased stretch (low complexity) spans 59–71 (NPSNSSVVPVRVS). Ser-61, Ser-64, and Ser-71 each carry phosphoserine. Residues 73–83 (DASSSTSTVRD) are compositionally biased toward polar residues. Residues 84-97 (SNGGNSENTNSSQN) show a composition bias toward low complexity. The span at 98-117 (LDETANIGSTGTPNDATSSS) shows a compositional bias: polar residues. Position 170 is a phosphoserine (Ser-170). A Protein kinase domain is found at 347-602 (FDLLKVIGKG…ADEIRNHPFF (256 aa)). ATP contacts are provided by residues 353-361 (IGKGSFGKV) and Lys-376. Asp-470 (proton acceptor) is an active-site residue. Thr-502 is subject to Phosphothreonine. Phosphothreonine; by PKH1 is present on Thr-504. An AGC-kinase C-terminal domain is found at 603-673 (SQLSWKRLLM…VGNEQLGSSM (71 aa)). Ser-644 and Ser-653 each carry phosphoserine. At Thr-662 the chain carries Phosphothreonine; by PKH1. Ser-671 carries the phosphoserine modification.

Belongs to the protein kinase superfamily. AGC Ser/Thr protein kinase family. RAC subfamily. Post-translationally, autophosphorylated. Phytosphingosine level stimulates phosphorylation by PKH1. The N-terminal half is phosphorylated by FPK1. Phosphorylation is inhibited by exogenous addition of phytosphingosine.

The protein resides in the cytoplasm. Its subcellular location is the cell membrane. The enzyme catalyses L-seryl-[protein] + ATP = O-phospho-L-seryl-[protein] + ADP + H(+). It carries out the reaction L-threonyl-[protein] + ATP = O-phospho-L-threonyl-[protein] + ADP + H(+). With respect to regulation, activated by phytosphingosine (PHS), a sphingoid long chain base. Activated by PKH1 phosphorylation. Its function is as follows. Plays an essential role in the proliferation of yeast cells. Involved in a signaling pathway, required for optimal cell wall integrity, that acts in parallel with the PKC1-SLT2-dependent pathway. Downstream kinase in the sphingolipid-mediated signaling pathway. Phosphorylation is regulated by the intracellular sphingolipid concentration. Disruption or inhibition of sphingolipid synthesis leads to the activation and phosphorylation of YPK1 through the TORC2 and PKH1 pathways, which in turn phosphorylates ORM1 and LAG1 to activate sphingolipid synthesis. Cooperates with SLI1 in mediating resistance to the sphingolipid biosynthesis inhibitor drug myriocin (ISP-1); kinase activity is essential for the resistance. Required for both receptor-mediated and fluid-phase endocytosis, but is not necessary for receptor phosphorylation or ubiquitination. Necessary for the internalization of plasma membrane proteins carrying different types of internalization signals. Acts downstream of the PKH kinases to control endocytosis by phosphorylating components of the endocytic machinery. Phosphorylation of residue Thr-504 in the activation loop and residue Thr-662 are essential for activity. Phosphorylates and down-regulates flippase activator FPK1. The sequence is that of Serine/threonine-protein kinase YPK1 (YPK1) from Saccharomyces cerevisiae (strain ATCC 204508 / S288c) (Baker's yeast).